Here is a 1164-residue protein sequence, read N- to C-terminus: Phospholipid-transporting ATPase IA (1164 aa).

Residues 1-75 are Cytoplasmic-facing; the sequence is MPTMRRTVSE…PRFLYSQFRR (75 aa). Ser-25 carries the phosphoserine modification. Thr-28 is modified (phosphothreonine). At Ser-29 the chain carries Phosphoserine. The chain crosses the membrane as a helical span at residues 76–96; that stretch reads AANSFFLFIALLQQIPDVSPT. At 97–100 the chain is on the exoplasmic loop side; it reads GRYT. A helical transmembrane segment spans residues 101–121; sequence TLVPLLFILAVAAIKEIIEDI. Residues 122-297 are Cytoplasmic-facing; that stretch reads KRHKADNAVN…SNVERITNVQ (176 aa). The chain crosses the membrane as a helical span at residues 298 to 318; it reads ILILFCILIAMSLVCSVGSAI. Residues 319–339 lie on the Exoplasmic loop side of the membrane; the sequence is WNRRHSGKDWYLHLHYGGASN. Residues 340–360 form a helical membrane-spanning segment; the sequence is FGLNFLTFIILFNNLIPISLL. The Cytoplasmic portion of the chain corresponds to 361 to 866; the sequence is VTLEVVKFTQ…KCILYCFYKN (506 aa). The active-site 4-aspartylphosphate intermediate is the Asp-409. ATP contacts are provided by Asp-409, Lys-410, and Thr-411. Residue Asp-409 participates in Mg(2+) binding. Residue Thr-411 coordinates Mg(2+). Ser-443 is subject to Phosphoserine. ATP is bound by residues Glu-508, Phe-549, Lys-572, Arg-605, Thr-685, Gly-686, Asp-687, 741-748, Arg-775, and Lys-781; that span reads ALIIDGKT. Asp-801 serves as a coordination point for Mg(2+). Positions 804 and 805 each coordinate ATP. Asp-805 lines the Mg(2+) pocket. The chain crosses the membrane as a helical span at residues 867-887; it reads IVLYIIEIWFAFVNGFSGQIL. Residues 888–890 are Exoplasmic loop-facing; that stretch reads FER. Residues 891–911 form a helical membrane-spanning segment; the sequence is WCIGLYNVMFTAMPPLTLGIF. The Cytoplasmic segment spans residues 912-939; sequence ERSCRKENMLKYPELYKTSQNALDFNTK. The helical transmembrane segment at 940–960 threads the bilayer; the sequence is VFWVHCLNGLFHSVILFWFPL. The Exoplasmic loop portion of the chain corresponds to 961–977; it reads KALQYGTVFGNGKTSDY. The chain crosses the membrane as a helical span at residues 978–998; sequence LLLGNFVYTFVVITVCLKAGL. The Cytoplasmic segment spans residues 999–1008; that stretch reads ETSYWTWFSH. A helical membrane pass occupies residues 1009–1029; sequence IAIWGSIALWVVFFGIYSSLW. The Exoplasmic loop segment spans residues 1030–1044; that stretch reads PAVPMAPDMSGEAAM. Residues 1045-1065 traverse the membrane as a helical segment; the sequence is LFSSGVFWVGLLSIPVASLLL. Residues 1066-1164 are Cytoplasmic-facing; sequence DVLYKVIKRT…DTTKQRPDEW (99 aa). 1095–1102 lines the ATP pocket; that stretch reads GAVVLGKS. Ser-1126 is subject to Phosphoserine.

The protein belongs to the cation transport ATPase (P-type) (TC 3.A.3) family. Type IV subfamily. In terms of assembly, component of a P4-ATPase flippase complex which consists of a catalytic alpha subunit and an accessory beta subunit. Interacts with TMEM30A to form a flippase complex; this complex forms an intermediate phosphoenzyme. Interacts with TMEM30B; this interaction is reported conflictingly. Mg(2+) serves as cofactor. Cleaved by calpain in a caspase- and calcium influx-dependent manner only during platelet apoptosis and may lead to inactivation. Found in most tissues except liver and testis. Most abundant in brain and lung. Also detected in fetal tissues. Isoform 1 is expressed in brain. Isoform 2 and isoform 3 are expressed in reticulocytes. Expressed in mouse hippocampus in both dentate gyrus (DG) and the CA3 regions. Expressed in both neuronal as well as non-neuronal cells within the DG. Highly expressed in platelets.

The protein localises to the cytoplasmic vesicle. It is found in the secretory vesicle. Its subcellular location is the chromaffin granule membrane. The protein resides in the cytoplasmic granule. It localises to the cell membrane. The protein localises to the endoplasmic reticulum. It is found in the golgi apparatus. Its subcellular location is the endomembrane system. It catalyses the reaction ATP + H2O + phospholipidSide 1 = ADP + phosphate + phospholipidSide 2.. It carries out the reaction a 1,2-diacyl-sn-glycero-3-phospho-L-serine(out) + ATP + H2O = a 1,2-diacyl-sn-glycero-3-phospho-L-serine(in) + ADP + phosphate + H(+). ATPase activity is stimulated by phosphatidylserine (PS) and minimally by phosphatidylethanolamine (PE). ATPase activity is inhibited by the vanadate and by the presence of calcium. Catalytic component of a P4-ATPase flippase complex which catalyzes the hydrolysis of ATP coupled to the transport of aminophospholipids from the outer to the inner leaflet of various membranes and ensures the maintenance of asymmetric distribution of phospholipids. Phospholipid translocation also seems to be implicated in vesicle formation and in uptake of lipid signaling molecules. In vitro, its ATPase activity is selectively and stereospecifically stimulated by phosphatidylserine (PS). The flippase complex ATP8A1:TMEM30A seems to play a role in regulation of cell migration probably involving flippase-mediated translocation of phosphatidylethanolamine (PE) at the cell membrane. Acts as aminophospholipid translocase at the cell membrane in neuronal cells; the activity is associated with hippocampus-dependent learning. May play a role in brain connectivity. This chain is Phospholipid-transporting ATPase IA, found in Mus musculus (Mouse).